The following is a 325-amino-acid chain: Replication factor C small subunit (325 aa).

44–51 is a binding site for ATP; it reads GPPGTGKT.

It belongs to the activator 1 small subunits family. RfcS subfamily. Heteromultimer composed of small subunits (RfcS) and large subunits (RfcL).

Part of the RFC clamp loader complex which loads the PCNA sliding clamp onto DNA. The protein is Replication factor C small subunit of Thermofilum pendens (strain DSM 2475 / Hrk 5).